Consider the following 452-residue polypeptide: UPF0210 protein Ccel_1722 (452 aa).

The protein belongs to the UPF0210 family. In terms of assembly, homodimer.

In Ruminiclostridium cellulolyticum (strain ATCC 35319 / DSM 5812 / JCM 6584 / H10) (Clostridium cellulolyticum), this protein is UPF0210 protein Ccel_1722.